Consider the following 200-residue polypeptide: GTP cyclohydrolase-2 (200 aa).

52–56 (RIHSE) lines the GTP pocket. Zn(2+) is bound by residues C57, C68, and C70. Residues Q73, 94–96 (EGR), and T116 each bind GTP. D128 functions as the Proton acceptor in the catalytic mechanism. R130 (nucleophile) is an active-site residue. T151 and K156 together coordinate GTP.

Belongs to the GTP cyclohydrolase II family. It depends on Zn(2+) as a cofactor.

It catalyses the reaction GTP + 4 H2O = 2,5-diamino-6-hydroxy-4-(5-phosphoribosylamino)-pyrimidine + formate + 2 phosphate + 3 H(+). Its pathway is cofactor biosynthesis; riboflavin biosynthesis; 5-amino-6-(D-ribitylamino)uracil from GTP: step 1/4. Functionally, catalyzes the conversion of GTP to 2,5-diamino-6-ribosylamino-4(3H)-pyrimidinone 5'-phosphate (DARP), formate and pyrophosphate. The sequence is that of GTP cyclohydrolase-2 from Psychromonas ingrahamii (strain DSM 17664 / CCUG 51855 / 37).